A 235-amino-acid polypeptide reads, in one-letter code: Small ribosomal subunit protein uS2 (235 aa).

Belongs to the universal ribosomal protein uS2 family.

The chain is Small ribosomal subunit protein uS2 from Anoxybacillus flavithermus (strain DSM 21510 / WK1).